The chain runs to 87 residues: DNA-directed RNA polymerase subunit omega (87 aa).

It belongs to the RNA polymerase subunit omega family. In terms of assembly, the RNAP catalytic core consists of 2 alpha, 1 beta, 1 beta' and 1 omega subunit. When a sigma factor is associated with the core the holoenzyme is formed, which can initiate transcription.

The catalysed reaction is RNA(n) + a ribonucleoside 5'-triphosphate = RNA(n+1) + diphosphate. Its function is as follows. Promotes RNA polymerase assembly. Latches the N- and C-terminal regions of the beta' subunit thereby facilitating its interaction with the beta and alpha subunits. The polypeptide is DNA-directed RNA polymerase subunit omega (Pseudomonas entomophila (strain L48)).